The following is a 780-amino-acid chain: Putative ABC transporter ATP-binding protein BL0043 (780 aa).

2 consecutive ABC transporter domains span residues 2-238 (LKDI…QSET) and 282-531 (IRVS…GPAH). Residue 34-41 (GPNGSGKS) coordinates ATP. The segment at 230 to 272 (AEAVSQSETEGSIGTEAAPSRPTNDSPRQREREDGSELPLLSD) is disordered. 316 to 323 (GVNGSGKS) contacts ATP. 4 helical membrane-spanning segments follow: residues 551–573 (FTMF…LAVI), 586–608 (SIHP…VRTG), 623–645 (GVTI…AVFL), and 759–778 (IAAR…AAII).

It belongs to the ABC transporter superfamily.

It localises to the cell membrane. In terms of biological role, probably part of an ABC transporter complex. Responsible for energy coupling to the transport system. This is Putative ABC transporter ATP-binding protein BL0043 from Bifidobacterium longum (strain NCC 2705).